Here is a 523-residue protein sequence, read N- to C-terminus: MSSTTPSDKDRVVIFDTTLRDGEQCPGATMTFEEKLNIAAMLDGMGVDVIEAGFPIASDGDFEAVNEIAKRTQNAVVCGLSRAGAKDIDRCAEAIRPAKRGRIHTFLSTSPVHMKYKLQMEPQAVFELVVSSVTRARNHTDDVEWSSEDGTRTEFDFLCRCVEAAIKAGATTINIPDTVGYAVPEEYYDLFKRVRETVPNSDKAVFSVHCHNDLGMAVANSMAGIRAGARQIECTINGIGERAGNAALEEVVMAMRVRNDKLPFWNKIDTTQLTHASKVVSAATSFPVQYNKAIVGRNAFAHESGIHQDGMLKNAQTYEIMLPETVGVKQTSLVMGKHSGRHAFIHKLEEMGHKLAGNQVEDAFVRFKALADRKKHIYDEDIEALIDEGMVSAHDRIKLLSLSVIAGTRGPQRATMKLDVDGVTKIEESEGNGPVDAVFNCIKSLVPHEAKLELYQVHAVTEGTDAQAEVSVRLSQDGRSMTARAADPDTLVASAKAYLGALNKLVMKRQRDVAQGAAAAAAS.

One can recognise a Pyruvate carboxyltransferase domain in the interval 12 to 274; the sequence is VVIFDTTLRD…WNKIDTTQLT (263 aa). 4 residues coordinate Mn(2+): Asp21, His209, His211, and Asn245. The interval 398–523 is regulatory domain; the sequence is KLLSLSVIAG…AQGAAAAAAS (126 aa).

It belongs to the alpha-IPM synthase/homocitrate synthase family. LeuA type 1 subfamily. Homodimer. Requires Mn(2+) as cofactor.

Its subcellular location is the cytoplasm. The enzyme catalyses 3-methyl-2-oxobutanoate + acetyl-CoA + H2O = (2S)-2-isopropylmalate + CoA + H(+). Its pathway is amino-acid biosynthesis; L-leucine biosynthesis; L-leucine from 3-methyl-2-oxobutanoate: step 1/4. Catalyzes the condensation of the acetyl group of acetyl-CoA with 3-methyl-2-oxobutanoate (2-ketoisovalerate) to form 3-carboxy-3-hydroxy-4-methylpentanoate (2-isopropylmalate). The protein is 2-isopropylmalate synthase of Bradyrhizobium sp. (strain BTAi1 / ATCC BAA-1182).